The following is a 258-amino-acid chain: Tryptophan synthase alpha chain (258 aa).

Catalysis depends on proton acceptor residues Glu44 and Asp55.

The protein belongs to the TrpA family. Tetramer of two alpha and two beta chains.

It carries out the reaction (1S,2R)-1-C-(indol-3-yl)glycerol 3-phosphate + L-serine = D-glyceraldehyde 3-phosphate + L-tryptophan + H2O. Its pathway is amino-acid biosynthesis; L-tryptophan biosynthesis; L-tryptophan from chorismate: step 5/5. The alpha subunit is responsible for the aldol cleavage of indoleglycerol phosphate to indole and glyceraldehyde 3-phosphate. This is Tryptophan synthase alpha chain from Petrotoga mobilis (strain DSM 10674 / SJ95).